The primary structure comprises 181 residues: Probable calcium-binding protein CML16 (181 aa).

A disordered region spans residues 1–24 (MSNTTEKKMPQQQQVERPTALAPA). EF-hand domains lie at 23-58 (PADA…IAPP), 63-98 (AGGR…GRGD), 100-135 (EHEA…IGEG), and 136-171 (CSAE…DAAA). Aspartate 36, aspartate 38, aspartate 40, arginine 42, glutamate 47, aspartate 76, aspartate 78, aspartate 80, glutamate 87, aspartate 113, aspartate 115, aspartate 117, arginine 119, glutamate 124, aspartate 149, aspartate 151, aspartate 153, cysteine 155, and glutamate 160 together coordinate Ca(2+).

Functionally, potential calcium sensor. In Oryza sativa subsp. japonica (Rice), this protein is Probable calcium-binding protein CML16 (CML16).